Reading from the N-terminus, the 329-residue chain is Ribosomal RNA small subunit methyltransferase H (329 aa).

S-adenosyl-L-methionine-binding positions include 34-36 (GGH), Asp-59, Phe-86, Asp-112, and Gln-119.

This sequence belongs to the methyltransferase superfamily. RsmH family.

The protein resides in the cytoplasm. It carries out the reaction cytidine(1402) in 16S rRNA + S-adenosyl-L-methionine = N(4)-methylcytidine(1402) in 16S rRNA + S-adenosyl-L-homocysteine + H(+). Specifically methylates the N4 position of cytidine in position 1402 (C1402) of 16S rRNA. This is Ribosomal RNA small subunit methyltransferase H from Chlorobium phaeobacteroides (strain DSM 266 / SMG 266 / 2430).